Here is a 214-residue protein sequence, read N- to C-terminus: Large ribosomal subunit protein uL3 (214 aa).

The tract at residues Ala133–Arg155 is disordered. Residue Gln151 is modified to N5-methylglutamine.

This sequence belongs to the universal ribosomal protein uL3 family. In terms of assembly, part of the 50S ribosomal subunit. Forms a cluster with proteins L14 and L19. Post-translationally, methylated by PrmB.

One of the primary rRNA binding proteins, it binds directly near the 3'-end of the 23S rRNA, where it nucleates assembly of the 50S subunit. In Cellvibrio japonicus (strain Ueda107) (Pseudomonas fluorescens subsp. cellulosa), this protein is Large ribosomal subunit protein uL3.